We begin with the raw amino-acid sequence, 268 residues long: Phosphoethanolamine/phosphocholine phosphatase (268 aa).

D32 serves as the catalytic Nucleophile. The Mg(2+) site is built by D32 and D34. The active-site Proton donor is the D34. Positions 43 and 123 each coordinate substrate. Position 203 (D203) interacts with Mg(2+).

This sequence belongs to the HAD-like hydrolase superfamily. PHOSPHO family. Mg(2+) serves as cofactor. Expressed at sites of mineralization in bone and cartilage. Highly expressed in hypertrophic chondrocytes compared to non-chondrogenic tissues. Expressed in chondrocytes but not in heart, liver, lung, kidney, spleen, muscle, adipose tissues not duodenum. In diaphyseal cortical bone, it is expressed in the osteoid layer of the periosteum, forming surfaces of growing osteons, and newly formed osteocytes, whereas it is not expressed in the endosteum and closed osteons. In growth plate cartilage, it is limited to the early hypertrophic chondrocytes and the ossification groove of Ranvier. Highly expressed on the mineralization surfaces of the cartilage remnants and trabecular bone within the primary spongiosa. Expressed in 17-day-old embryonic calvaria, the osteoid present on the intramembranous and periosteal bone surfaces but not in soft tissues examined.

Its subcellular location is the extracellular vesicle. The enzyme catalyses phosphoethanolamine + H2O = ethanolamine + phosphate. The catalysed reaction is phosphocholine + H2O = choline + phosphate. Functionally, phosphatase that has a high activity toward phosphoethanolamine (PEA) and phosphocholine (PCho). Involved in the generation of inorganic phosphate for bone mineralization. This Gallus gallus (Chicken) protein is Phosphoethanolamine/phosphocholine phosphatase (PHOSPHO1).